A 453-amino-acid polypeptide reads, in one-letter code: V-type proton ATPase subunit B (453 aa).

Arginine 341 serves as a coordination point for ATP.

Belongs to the ATPase alpha/beta chains family. In terms of assembly, V-ATPase is a heteromultimeric enzyme made up of two complexes: the ATP-hydrolytic V1 complex and the proton translocation V0 complex. The V1 complex consists of three catalytic AB heterodimers that form a heterohexamer, three peripheral stalks each consisting of EG heterodimers, one central rotor including subunits D and F, and the regulatory subunits C and H. The proton translocation complex V0 consists of the proton transport subunit a, a ring of proteolipid subunits c9c'', rotary subunit d, subunits e and f, and two accessory subunits.

Functionally, non-catalytic subunit of the V1 complex of vacuolar(H+)-ATPase (V-ATPase), a multisubunit enzyme composed of a peripheral complex (V1) that hydrolyzes ATP and a membrane integral complex (V0) that translocates protons. V-ATPase is responsible for acidifying and maintaining the pH of intracellular compartments and in some cell types, is targeted to the plasma membrane, where it is responsible for acidifying the extracellular environment. Essential for the proper assembly and activity of V-ATPase. This is V-type proton ATPase subunit B (ATP6V1B) from Gallus gallus (Chicken).